Consider the following 479-residue polypeptide: Poly(A) polymerase catalytic subunit (479 aa).

Residues Asp202 and Asp204 contribute to the active site. Asp202, Asp204, and Asp253 together coordinate Ca(2+).

The protein belongs to the poxviridae poly(A) polymerase catalytic subunit family. In terms of assembly, heterodimer of a large (catalytic) subunit and a small (regulatory) subunit.

The enzyme catalyses RNA(n) + ATP = RNA(n)-3'-adenine ribonucleotide + diphosphate. Polymerase that creates the 3'-poly(A) tail of mRNA's. The polypeptide is Poly(A) polymerase catalytic subunit (OPG063) (Bos taurus (Bovine)).